The following is an 863-amino-acid chain: MGYDSQVRTKKRHRITVVCTNCKKRKSKCDRTKPCGTCVRLGDVDSCVYLTDSSGQPESSPSLNDADPLRKQSTPAERISPGFIKKRRSSQTRQDEDHWQRVRELESQSSLYYLPIHEETPFFIDLIPNGFYLETKRSADNLFGLFTDRAIENRDPYLQAMVTFRSIAIKKMMDKLGSNGNNVKNGSLPKSFEALSTFDADDERHISDDVVDKGNNFRMHQTIHKSLFNKFAQYRENNAKKFSSETILAKDYLPPLKILESEVLALFEEKIYNMIPIFDMKILRHEITIFYQNIVEKGNPISIKHYDHMVFCIILLIIKICRLSVQFSKLTPYIYPVLQEIDTSKFLALVKHYLFETKVLRKCNFLQLQCLILLRFLHWCAPEDGDGPETQYCQILMGTIISSCKEMGINWYCFSHPEKYSFKINRHTRPSYDIMKPSDYISVFRKIWSYVLFWDRKMCFISGEECQIGKTLQCHFKEEADTPTWYIRMLTLDNLMKKINDTLNDDPGKVDLNLLHRLINDLKRNFHILKSLSKNEKETMRHFDFEMEWIIDLFSLSLLHGEMIFYEYDCNITKFYKSFQDLWDMVIHISEKCYNYFFNSDALEVDSLTKFYTNRIVEIVANKVLVIVPAFILRGDRFKTIQYADKKKMIEFLYGVSSVYFNEFGFEYYRCFRKMFTAKIAYKILNRSCEKDAWRIILKFLLNELKLEDNGDSYIDYNDMRLKDICPIILEFQETVQKYDGYRPDILSIWNNEFYPIGKYNDDMTGFKFQMRIKEMQEFLDMEKYSDRFNIFSSFYDHASSQLAKHTEVDTNISITNEQVAETPQKELLQQPLAPALPVNDLIVSEFDVIEDIFDPVDFVSFF.

Residues 19–47 (CTNCKKRKSKCDRTKPCGTCVRLGDVDSC) constitute a DNA-binding region (zn(2)-C6 fungal-type). The span at 52-63 (DSSGQPESSPSL) shows a compositional bias: polar residues. Positions 52 to 81 (DSSGQPESSPSLNDADPLRKQSTPAERISP) are disordered.

Belongs to the OAF3 family.

The protein localises to the cytoplasm. Its subcellular location is the nucleus. The protein resides in the mitochondrion. Its function is as follows. Transcriptional inhibitor with a significantly increased number of target genes in response to oleate. In Saccharomyces cerevisiae (strain RM11-1a) (Baker's yeast), this protein is Oleate activated transcription factor 3 (OAF3).